The primary structure comprises 837 residues: Granulocyte colony-stimulating factor receptor (837 aa).

Residues 1–25 form the signal peptide; the sequence is MVGLGACTLTGVTLIFLLLPRSLES. 2 disulfides stabilise this stretch: Cys26–Cys52 and Cys46–Cys102. Residues 26–118 enclose the Ig-like C2-type domain; it reads CGHIEISPPV…SVQLLDQAEL (93 aa). Residues 26 to 626 are Extracellular-facing; that stretch reads CGHIEISPPV…LTLRTLDPSD (601 aa). Residues Asn51, Asn94, and Asn129 are each glycosylated (N-linked (GlcNAc...) asparagine). 5 consecutive Fibronectin type-III domains span residues 126-231, 236-331, 334-433, 434-529, and 530-624; these read SPSN…LEPP, LDIG…LRPT, APTI…NEGP, AVTG…GERA, and PPHA…TLDP. Intrachain disulfides connect Cys132/Cys143, Cys168/Cys219, Cys178/Cys187, Cys249/Cys296, and Cys267/Cys310. Residues Asn186 and Asn279 are each glycosylated (N-linked (GlcNAc...) asparagine). Residues 319 to 323 carry the WSXWS motif motif; that stretch reads WSPWS. N-linked (GlcNAc...) asparagine glycans are attached at residues Asn392, Asn408, Asn474, Asn487, Asn582, and Asn613. Residues 627 to 650 traverse the membrane as a helical segment; that stretch reads LNIFLGILCLVLLSTTCVVTWLCC. Residues 651–837 lie on the Cytoplasmic side of the membrane; that stretch reads KRRGKTSFWS…VHGVEEQGGF (187 aa). Positions 658–666 match the Box 1 motif motif; it reads FWSDVPDPA.

The protein belongs to the type I cytokine receptor family. Type 2 subfamily. As to quaternary structure, homodimer. The dimeric receptor binds two CSF3 molecules. Interacts with CEACAM1; down-regulates the CSF3R-STAT3 pathway through recruitment of PTPN6 that dephosphorylates CSF3R. N-glycosylated. Found in bone marrow.

The protein resides in the membrane. Functionally, receptor for granulocyte colony-stimulating factor (CSF3). In addition it may function in some adhesion or recognition events at the cell surface. This is Granulocyte colony-stimulating factor receptor (Csf3r) from Mus musculus (Mouse).